We begin with the raw amino-acid sequence, 481 residues long: UDP-N-acetylmuramoylalanine--D-glutamate ligase (481 aa).

Position 108–114 (108–114) interacts with ATP; it reads GTNGKTS.

This sequence belongs to the MurCDEF family.

It is found in the cytoplasm. The enzyme catalyses UDP-N-acetyl-alpha-D-muramoyl-L-alanine + D-glutamate + ATP = UDP-N-acetyl-alpha-D-muramoyl-L-alanyl-D-glutamate + ADP + phosphate + H(+). It participates in cell wall biogenesis; peptidoglycan biosynthesis. In terms of biological role, cell wall formation. Catalyzes the addition of glutamate to the nucleotide precursor UDP-N-acetylmuramoyl-L-alanine (UMA). This Bifidobacterium longum subsp. infantis (strain ATCC 15697 / DSM 20088 / JCM 1222 / NCTC 11817 / S12) protein is UDP-N-acetylmuramoylalanine--D-glutamate ligase.